Consider the following 905-residue polypeptide: Methionine--tRNA ligase, cytoplasmic (905 aa).

Residues 1–75 enclose the GST N-terminal domain; that stretch reads MKLFVGEGNP…YFYLSSGHDM (75 aa). In terms of domain architecture, GST C-terminal spans 72-199; that stretch reads GHDMCDLSNQ…DKGSSVFKPF (128 aa). The 'HIGH' region signature appears at 271–281; the sequence is PYVNNVPHLGN. The short motif at 591-595 is the 'KMSKS' region element; sequence KFSKS. Residue Lys-594 participates in ATP binding. Disordered regions lie at residues 813 to 874 and 886 to 905; these read RFGG…VIDP and LALA…KKKK. Positions 841–874 are enriched in basic and acidic residues; the sequence is GPERVKELMQELEKQGNHVRELKGKKAEKSVIDP. A WHEP-TRS domain is found at 844-900; sequence RVKELMQELEKQGNHVRELKGKKAEKSVIDPEVQKLLALKKELALAEGKSPDPPTQK.

The protein belongs to the class-I aminoacyl-tRNA synthetase family. Monomer. Part of a multisubunit complex that groups tRNA ligases for Arg (RARS1), Asp (DARS1), Gln (QARS1), Ile (IARS1), Leu (LARS1), Lys (KARS1), Met (MARS1) the bifunctional ligase for Glu and Pro (EPRS1) and the auxiliary subunits AIMP1/p43, AIMP2/p38 and EEF1E1/p18.

Its subcellular location is the cytoplasm. It localises to the cytosol. The protein localises to the nucleus. The protein resides in the nucleolus. It catalyses the reaction tRNA(Met) + L-methionine + ATP = L-methionyl-tRNA(Met) + AMP + diphosphate. Catalyzes the specific attachment of an amino acid to its cognate tRNA in a 2 step reaction: the amino acid (AA) is first activated by ATP to form AA-AMP and then transferred to the acceptor end of the tRNA. Plays a role in the synthesis of ribosomal RNA in the nucleolus. The protein is Methionine--tRNA ligase, cytoplasmic (mars1) of Xenopus laevis (African clawed frog).